Consider the following 273-residue polypeptide: Large ribosomal subunit protein uL2 (273 aa).

Disordered regions lie at residues 32–53 (PLVE…TTRH) and 221–273 (RGTA…RRSK). Low complexity predominate over residues 39–48 (KSGGRNNNGR).

The protein belongs to the universal ribosomal protein uL2 family. As to quaternary structure, part of the 50S ribosomal subunit. Forms a bridge to the 30S subunit in the 70S ribosome.

Functionally, one of the primary rRNA binding proteins. Required for association of the 30S and 50S subunits to form the 70S ribosome, for tRNA binding and peptide bond formation. It has been suggested to have peptidyltransferase activity; this is somewhat controversial. Makes several contacts with the 16S rRNA in the 70S ribosome. The chain is Large ribosomal subunit protein uL2 from Erwinia tasmaniensis (strain DSM 17950 / CFBP 7177 / CIP 109463 / NCPPB 4357 / Et1/99).